Consider the following 98-residue polypeptide: MYEYLLLTRKNALFSLAINEPSPTFALTIIAIFSSTNVRSSVVRLGCFRVEICCTCHTQYLKLEIMVIISYLKYVNLPCSFIFISNSFALVFKISAEV.

2 consecutive transmembrane segments (helical) span residues 13-33 (LFSL…IAIF) and 65-85 (IMVI…IFIS).

It localises to the membrane. This is an uncharacterized protein from Saccharomyces cerevisiae (strain ATCC 204508 / S288c) (Baker's yeast).